Reading from the N-terminus, the 462-residue chain is Metal cation symporter ZIP8 (462 aa).

The signal sequence occupies residues 1–19 (MAPGRAVAGLLLLAATSLG). The Extracellular portion of the chain corresponds to 20–132 (HPSEGPELAF…PSLSEVWGYG (113 aa)). 3 N-linked (GlcNAc...) asparagine glycosylation sites follow: Asn-40, Asn-88, and Asn-96. The chain crosses the membrane as a helical span at residues 133–153 (FLSVTIINLASLLGLILTPLI). The Cytoplasmic portion of the chain corresponds to 154 to 160 (KKSYFPK). Residues 161-181 (ILTYFVGLAIGTLFSNAIFQL) form a helical membrane-spanning segment. Residues 182 to 191 (IPEAFGFNPK) lie on the Extracellular side of the membrane. A helical transmembrane segment spans residues 192–212 (IDNYVEKAVAVFGGFYMLFFV). Over 213–367 (ERTLKMLLKT…LNAGMSTRQA (155 aa)) the chain is Cytoplasmic. The short motif at 345 to 350 (EEFPHE) is the XEXPHE-motif element. A helical transmembrane segment spans residues 368–388 (LLFNFLSACSCYVGLAFGILV). Over 389 to 390 (GN) the chain is Extracellular. The helical transmembrane segment at 391–411 (NFAPNIIFALAGGMFLYISLA) threads the bilayer. The Cytoplasmic portion of the chain corresponds to 412-431 (DMFPEMNDMLREKVTGRQTD). The chain crosses the membrane as a helical span at residues 432–452 (FTFFMIQNAGMLTGFTAILLI). The Extracellular portion of the chain corresponds to 453–462 (TLYAGDIELQ).

Belongs to the ZIP transporter (TC 2.A.5) family. As to quaternary structure, homodimer. N-glycosylated. N-glycosylation is not required for proper iron and zinc transport. As to expression, ubiquitously expressed.

It localises to the cell membrane. The protein resides in the apical cell membrane. Its subcellular location is the basolateral cell membrane. The protein localises to the lysosome membrane. It catalyses the reaction Zn(2+)(out) + 2 hydrogencarbonate(out) = Zn(2+)(in) + 2 hydrogencarbonate(in). It carries out the reaction selenite(out) + Zn(2+)(out) + hydrogencarbonate(out) = selenite(in) + Zn(2+)(in) + hydrogencarbonate(in). The catalysed reaction is Mn(2+)(out) + 2 hydrogencarbonate(out) = Mn(2+)(in) + 2 hydrogencarbonate(in). The enzyme catalyses Cd(2+)(out) + 2 hydrogencarbonate(out) = Cd(2+)(in) + 2 hydrogencarbonate(in). It catalyses the reaction Fe(2+)(out) + 2 hydrogencarbonate(out) = Fe(2+)(in) + 2 hydrogencarbonate(in). It carries out the reaction Co(2+)(out) + 2 hydrogencarbonate(out) = Co(2+)(in) + 2 hydrogencarbonate(in). Electroneutral divalent metal cation:bicarbonate symporter of the plasma membrane mediating the cellular uptake of zinc and manganese, two divalent metal cations important for development, tissue homeostasis and immunity. Transports an electroneutral complex composed of a divalent metal cation and two bicarbonate anions or alternatively a bicarbonate and a selenite anion. Thereby, it also contributes to the cellular uptake of selenium, an essential trace metal and micronutrient. Also imports cadmium a non-essential metal which is cytotoxic and carcinogenic. May also transport iron and cobalt through membranes. Through zinc import, indirectly regulates the metal-dependent transcription factor MTF1 and the expression of some metalloproteases involved in cartilage catabolism and also probably heart development. Also indirectly regulates the expression of proteins involved in cell morphology and cytoskeleton organization. Indirectly controls innate immune function and inflammatory response by regulating zinc cellular uptake which in turn modulates the expression of genes specific of these processes. Protects, for instance, cells from injury and death at the onset of inflammation. By regulating zinc influx into monocytes also directly modulates their adhesion to endothelial cells and arteries. Reclaims manganese from the bile at the apical membrane of hepatocytes, thereby regulating the activity of the manganese-dependent enzymes through the systemic levels of the nutrient. Also participates in manganese reabsorption in the proximal tubule of the kidney. By mediating the extracellular uptake of manganese by cells of the blood-brain barrier, may also play a role in the transport of the micronutrient to the brain. With manganese cellular uptake also participates in mitochondrial proper function. Finally, also probably functions intracellularly, translocating zinc from lysosome to cytosol to indirectly enhance the expression of specific genes during TCR-mediated T cell activation. In Mus musculus (Mouse), this protein is Metal cation symporter ZIP8.